A 72-amino-acid chain; its full sequence is Prokaryotic ubiquitin-like protein Pup (72 aa).

Over residues 1–10 the composition is skewed to gly residues; sequence MATKDTGGGQ. Positions 1–45 are disordered; it reads MATKDTGGGQQKATRSTEEVEEQAQDAQASEDLKERQEKLSDDVD. The stretch at 10–60 forms a coiled coil; it reads QQKATRSTEEVEEQAQDAQASEDLKERQEKLSDDVDSVLDEIDDVLEENAE. Residues 28-66 are ARC ATPase binding; that stretch reads QASEDLKERQEKLSDDVDSVLDEIDDVLEENAEDFVRSF. The span at 31–42 shows a compositional bias: basic and acidic residues; it reads EDLKERQEKLSD. An Isoglutamyl lysine isopeptide (Glu-Lys) (interchain with K-? in acceptor proteins) cross-link involves residue E72.

The protein belongs to the prokaryotic ubiquitin-like protein family. Strongly interacts with the proteasome-associated ATPase ARC through a hydrophobic interface; the interacting region of Pup lies in its C-terminal half. There is one Pup binding site per ARC hexamer ring.

Its pathway is protein degradation; proteasomal Pup-dependent pathway. Its function is as follows. Protein modifier that is covalently attached to lysine residues of substrate proteins, thereby targeting them for proteasomal degradation. The tagging system is termed pupylation. In Streptomyces coelicolor (strain ATCC BAA-471 / A3(2) / M145), this protein is Prokaryotic ubiquitin-like protein Pup.